Reading from the N-terminus, the 111-residue chain is U-scoloptoxin(16)-Sm2a (111 aa).

The N-terminal stretch at 1 to 28 is a signal peptide; it reads MCAKPNHLFVTVTFIFGFAVCIVQISAW.

It belongs to the scoloptoxin-16 family. Contains 4 disulfide bonds. As to expression, expressed by the venom gland.

It is found in the secreted. This is U-scoloptoxin(16)-Sm2a from Scolopendra morsitans (Tanzanian blue ringleg centipede).